We begin with the raw amino-acid sequence, 235 residues long: MGQKVHPHGIRLGIVKPWSSTWFANTQDFADNLEGDFKVRQFLNKELANASVSRITIERPAKSIRVTIHTARPGIVIGKKGEDVEKLRNAVAKIAGVPAQINIAEVKKPELDAKLVADSIASQLERRVMFRRAMKKAVQNAMRLGAKGIKVEVSGRLGGAEIARSEWYREGRVPLHTLRADIDYNTAEAHTTYGVIGVKVWIFKGEILGGMAALAQPEQQPTDKPKKVPRGKGRK.

A KH type-2 domain is found at 39–107 (VRQFLNKELA…PAQINIAEVK (69 aa)). The segment at 216–235 (QPEQQPTDKPKKVPRGKGRK) is disordered.

The protein belongs to the universal ribosomal protein uS3 family. As to quaternary structure, part of the 30S ribosomal subunit. Forms a tight complex with proteins S10 and S14.

In terms of biological role, binds the lower part of the 30S subunit head. Binds mRNA in the 70S ribosome, positioning it for translation. The chain is Small ribosomal subunit protein uS3 from Aggregatibacter actinomycetemcomitans (Actinobacillus actinomycetemcomitans).